The following is a 509-amino-acid chain: T-complex protein 11-like protein 1 (509 aa).

Basic and acidic residues predominate over residues 1–12 (MSENLDKSHVDE). The interval 1–57 (MSENLDKSHVDEAGEAEAAASEQGLEGALECSDETLQKKVKSDSPSSQRVGRPHSSP) is disordered. Positions 16-30 (AEAAASEQGLEGALE) are enriched in low complexity. Residue serine 56 is modified to Phosphoserine.

It belongs to the TCP11 family.

In Mus musculus (Mouse), this protein is T-complex protein 11-like protein 1 (Tcp11l1).